A 458-amino-acid polypeptide reads, in one-letter code: ATP synthase subunit beta (458 aa).

148–155 contacts ATP; sequence GGAGVGKT.

The protein belongs to the ATPase alpha/beta chains family. F-type ATPases have 2 components, CF(1) - the catalytic core - and CF(0) - the membrane proton channel. CF(1) has five subunits: alpha(3), beta(3), gamma(1), delta(1), epsilon(1). CF(0) has three main subunits: a(1), b(2) and c(9-12). The alpha and beta chains form an alternating ring which encloses part of the gamma chain. CF(1) is attached to CF(0) by a central stalk formed by the gamma and epsilon chains, while a peripheral stalk is formed by the delta and b chains.

The protein localises to the cell inner membrane. It catalyses the reaction ATP + H2O + 4 H(+)(in) = ADP + phosphate + 5 H(+)(out). Its function is as follows. Produces ATP from ADP in the presence of a proton gradient across the membrane. The catalytic sites are hosted primarily by the beta subunits. This chain is ATP synthase subunit beta, found in Alkalilimnicola ehrlichii (strain ATCC BAA-1101 / DSM 17681 / MLHE-1).